The chain runs to 172 residues: Alpha-crystallin A chain (172 aa).

Position 1 is an N-acetylmethionine (Met1). The required for complex formation with BFSP1 and BFSP2 stretch occupies residues 1–63 (MDVTIQHPWF…RTVLDSGISE (63 aa)). Gln6 is subject to Deamidated glutamine; partial. At Ser45 the chain carries Phosphoserine. Gln50 carries the post-translational modification Deamidated glutamine; partial. Positions 52-163 (LFRTVLDSGI…HERAIPVARE (112 aa)) constitute a sHSP domain. Lys70 carries the post-translational modification N6-acetyllysine. Gln90 carries the post-translational modification Deamidated glutamine; partial. Lys99 bears the N6-acetyllysine mark. A Zn(2+)-binding site is contributed by His100. Asn101 bears the Deamidated asparagine; partial mark. The Zn(2+) site is built by Glu102 and His107. Ser122 carries the phosphoserine modification. Residue Asn123 is modified to Deamidated asparagine; partial. At Gln147 the chain carries Deamidated glutamine; partial. His154 lines the Zn(2+) pocket. Residue Ser168 is glycosylated (O-linked (GlcNAc) serine).

It belongs to the small heat shock protein (HSP20) family. As to quaternary structure, heteromer composed of three CRYAA and one CRYAB subunits. Inter-subunit bridging via zinc ions enhances stability, which is crucial as there is no protein turn over in the lens. Can also form homodimers and homotetramers (dimers of dimers) which serve as the building blocks of homooligomers. Within homooligomers, the zinc-binding motif is created from residues of 3 different molecules. His-100 and Glu-102 from one molecule are ligands of the zinc ion, and His-107 and His-154 residues from additional molecules complete the site with tetrahedral coordination geometry. Part of a complex required for lens intermediate filament formation composed of BFSP1, BFSP2 and CRYAA. Acetylation at Lys-70 may increase chaperone activity. In terms of processing, undergoes age-dependent proteolytical cleavage at the C-terminus.

Its subcellular location is the cytoplasm. The protein resides in the nucleus. Contributes to the transparency and refractive index of the lens. Acts as a chaperone, preventing aggregation of various proteins under a wide range of stress conditions. Required for the correct formation of lens intermediate filaments as part of a complex composed of BFSP1, BFSP2 and CRYAA. This is Alpha-crystallin A chain (CRYAA) from Macaca mulatta (Rhesus macaque).